The sequence spans 308 residues: Cytochrome c biogenesis protein CcsA (308 aa).

The next 7 membrane-spanning stretches (helical) occupy residues 17-37, 43-63, 70-90, 142-162, 213-233, 246-260, and 274-294; these read IISI…VGLC, GMIT…IYSG, LYES…VPYF, MLLS…LLVI, VIGL…VWAN, ETWA…AIYL, and AIVA…VNLL.

This sequence belongs to the CcmF/CycK/Ccl1/NrfE/CcsA family. As to quaternary structure, may interact with Ccs1.

It is found in the plastid. The protein localises to the chloroplast thylakoid membrane. Functionally, required during biogenesis of c-type cytochromes (cytochrome c6 and cytochrome f) at the step of heme attachment. This Nymphaea alba (White water-lily) protein is Cytochrome c biogenesis protein CcsA.